The sequence spans 44 residues: Large ribosomal subunit protein bL34 (44 aa).

The interval 1–26 (MKMTFQPKKRQRAKVHGFRQRMKTAG) is disordered. Residues 7 to 22 (PKKRQRAKVHGFRQRM) show a composition bias toward basic residues.

It belongs to the bacterial ribosomal protein bL34 family.

This is Large ribosomal subunit protein bL34 from Agathobacter rectalis (strain ATCC 33656 / DSM 3377 / JCM 17463 / KCTC 5835 / VPI 0990) (Eubacterium rectale).